Here is a 358-residue protein sequence, read N- to C-terminus: Ribosomal RNA large subunit methyltransferase M (358 aa).

S-adenosyl-L-methionine-binding positions include S183, 216-219 (APGG), D235, D255, and D271. The active-site Proton acceptor is the K300.

Belongs to the class I-like SAM-binding methyltransferase superfamily. RNA methyltransferase RlmE family. RlmM subfamily. In terms of assembly, monomer.

It is found in the cytoplasm. It carries out the reaction cytidine(2498) in 23S rRNA + S-adenosyl-L-methionine = 2'-O-methylcytidine(2498) in 23S rRNA + S-adenosyl-L-homocysteine + H(+). In terms of biological role, catalyzes the 2'-O-methylation at nucleotide C2498 in 23S rRNA. The chain is Ribosomal RNA large subunit methyltransferase M from Pseudomonas fluorescens (strain SBW25).